Reading from the N-terminus, the 343-residue chain is S-adenosylmethionine:tRNA ribosyltransferase-isomerase (343 aa).

Belongs to the QueA family. In terms of assembly, monomer.

It is found in the cytoplasm. It carries out the reaction 7-aminomethyl-7-carbaguanosine(34) in tRNA + S-adenosyl-L-methionine = epoxyqueuosine(34) in tRNA + adenine + L-methionine + 2 H(+). It participates in tRNA modification; tRNA-queuosine biosynthesis. In terms of biological role, transfers and isomerizes the ribose moiety from AdoMet to the 7-aminomethyl group of 7-deazaguanine (preQ1-tRNA) to give epoxyqueuosine (oQ-tRNA). The polypeptide is S-adenosylmethionine:tRNA ribosyltransferase-isomerase (Dehalococcoides mccartyi (strain CBDB1)).